The sequence spans 461 residues: Mitochondrial distribution and morphology protein 12 (461 aa).

Positions 1 to 454 (MSLDLDWNLL…YPNYYTIDLP (454 aa)) constitute an SMP-LTD domain. Disordered stretches follow at residues 75–104 (RRRG…VHHG) and 226–301 (DASS…PSSA). 2 stretches are compositionally biased toward polar residues: residues 80-97 (RQTT…SPTD) and 272-288 (RATS…QNSP).

This sequence belongs to the MDM12 family. In terms of assembly, component of the ER-mitochondria encounter structure (ERMES) or MDM complex, composed of MMM1, MDM10, MDM12 and MDM34. An MMM1 homodimer associates with one molecule of MDM12 on each side in a pairwise head-to-tail manner, and the SMP-LTD domains of MMM1 and MDM12 generate a continuous hydrophobic tunnel for phospholipid trafficking.

The protein resides in the mitochondrion outer membrane. It localises to the endoplasmic reticulum membrane. Component of the ERMES/MDM complex, which serves as a molecular tether to connect the endoplasmic reticulum (ER) and mitochondria. Components of this complex are involved in the control of mitochondrial shape and protein biogenesis, and function in nonvesicular lipid trafficking between the ER and mitochondria. MDM12 is required for the interaction of the ER-resident membrane protein MMM1 and the outer mitochondrial membrane-resident beta-barrel protein MDM10. The MDM12-MMM1 subcomplex functions in the major beta-barrel assembly pathway that is responsible for biogenesis of all mitochondrial outer membrane beta-barrel proteins, and acts in a late step after the SAM complex. The MDM10-MDM12-MMM1 subcomplex further acts in the TOM40-specific pathway after the action of the MDM12-MMM1 complex. Essential for establishing and maintaining the structure of mitochondria and maintenance of mtDNA nucleoids. In Mycosarcoma maydis (Corn smut fungus), this protein is Mitochondrial distribution and morphology protein 12.